A 177-amino-acid chain; its full sequence is Immunity protein CdiI-YPIII (177 aa).

As to quaternary structure, interacts with the C-terminal DNase fragment (residues 954-1077) of cognate toxin CdiA-YPIII.

Its function is as follows. Immunity protein component of a toxin-immunity protein module, which functions as a cellular contact-dependent growth inhibition (CDI) system. CDI modules allow bacteria to communicate with and inhibit the growth of closely related neighboring bacteria in a contact-dependent fashion. Neutralizes the toxic activity of cognate toxin CdiA-YPIII (residues 954-1077). Does not inhibit toxic activity of CdiA from other toxin-immunity modules. The polypeptide is Immunity protein CdiI-YPIII (Yersinia pseudotuberculosis serotype O:3 (strain YPIII)).